The primary structure comprises 276 residues: Small ribosomal subunit protein uS3 (276 aa).

Residues 39–110 form the KH type-2 domain; that stretch reads IRRETMKFLK…KINIKIKEIK (72 aa).

This sequence belongs to the universal ribosomal protein uS3 family. Part of the 30S ribosomal subunit. Forms a tight complex with proteins S10 and S14.

Binds the lower part of the 30S subunit head. Binds mRNA in the 70S ribosome, positioning it for translation. The chain is Small ribosomal subunit protein uS3 from Borrelia turicatae (strain 91E135).